A 286-amino-acid polypeptide reads, in one-letter code: Shikimate dehydrogenase (NADP(+)) (286 aa).

Shikimate-binding positions include 25–27 (SLS) and Thr72. Lys76 (proton acceptor) is an active-site residue. Residue Glu88 participates in NADP(+) binding. The shikimate site is built by Asn97 and Asp113. Residues 138–142 (GSGGA), 162–167 (NRTIER), and Ile232 contribute to the NADP(+) site. Shikimate is bound at residue Tyr234. Position 255 (Gly255) interacts with NADP(+).

The protein belongs to the shikimate dehydrogenase family. Homodimer.

It carries out the reaction shikimate + NADP(+) = 3-dehydroshikimate + NADPH + H(+). It participates in metabolic intermediate biosynthesis; chorismate biosynthesis; chorismate from D-erythrose 4-phosphate and phosphoenolpyruvate: step 4/7. Its function is as follows. Involved in the biosynthesis of the chorismate, which leads to the biosynthesis of aromatic amino acids. Catalyzes the reversible NADPH linked reduction of 3-dehydroshikimate (DHSA) to yield shikimate (SA). The sequence is that of Shikimate dehydrogenase (NADP(+)) from Magnetococcus marinus (strain ATCC BAA-1437 / JCM 17883 / MC-1).